The following is a 346-amino-acid chain: MSTLLIDLKGQTLRQEEVELLEHPLVAGLILFTRNFYDRPQIQALVKDIRQRVKKPLLITVDQEGGRVQRFRDGFTKLPAMQSFAALIQEPEQQLATAKEAGWQMAAEMTALDIDLSFAPVLDLGHECKAIGDRSFCSDAESVFRLASAFIDGMHAAGMATTGKHFPGHGHVLADSHLETPFDNRPSAVIFERDIRPFQRLIAQNKLNAVMPAHVIYTDCDDQPASGSKYWLQDILRRKLGFHGAVFSDDLGMKGAGFMGDFVTRSEKALSAGCDLLLLCNEPDGVVQVLDNLKLNESRPHFEARQQRLKTLFKKKSFNWTELTQTEKWLKNTQKLTALQAQWQSS.

Residues aspartate 62, arginine 70, arginine 134, and 164–165 (KH) contribute to the substrate site. Histidine 177 (proton donor/acceptor) is an active-site residue. Catalysis depends on aspartate 249, which acts as the Nucleophile.

The protein belongs to the glycosyl hydrolase 3 family. NagZ subfamily.

The protein localises to the cytoplasm. It catalyses the reaction Hydrolysis of terminal non-reducing N-acetyl-D-hexosamine residues in N-acetyl-beta-D-hexosaminides.. It functions in the pathway cell wall biogenesis; peptidoglycan recycling. Functionally, plays a role in peptidoglycan recycling by cleaving the terminal beta-1,4-linked N-acetylglucosamine (GlcNAc) from peptide-linked peptidoglycan fragments, giving rise to free GlcNAc, anhydro-N-acetylmuramic acid and anhydro-N-acetylmuramic acid-linked peptides. This is Beta-hexosaminidase from Actinobacillus succinogenes (strain ATCC 55618 / DSM 22257 / CCUG 43843 / 130Z).